The following is a 129-amino-acid chain: V-type proton ATPase subunit F 2 (129 aa).

This sequence belongs to the V-ATPase F subunit family. V-ATPase is a heteromultimeric enzyme made up of two complexes: the ATP-hydrolytic V1 complex and the proton translocation V0 complex. The V1 complex consists of three catalytic AB heterodimers that form a heterohexamer, three peripheral stalks each consisting of EG heterodimers, one central rotor including subunits D and F, and the regulatory subunits C and H. The proton translocation complex V0 consists of the proton transport subunit a, a ring of proteolipid subunits c9c'', rotary subunit d, subunits e and f, and the accessory subunits VhaAC45 and ATP6AP2.

Functionally, subunit of the V1 complex of vacuolar(H+)-ATPase (V-ATPase), a multisubunit enzyme composed of a peripheral complex (V1) that hydrolyzes ATP and a membrane integral complex (V0) that translocates protons. V-ATPase is responsible for acidifying and maintaining the pH of intracellular compartments and in some cell types, is targeted to the plasma membrane, where it is responsible for acidifying the extracellular environment. In Drosophila melanogaster (Fruit fly), this protein is V-type proton ATPase subunit F 2 (Vha14-2).